The following is an 888-amino-acid chain: Rab GTPase-activating protein eat-17 (888 aa).

Positions 41–60 (RSNSNSTSSPRNSPSQLSPP) are enriched in low complexity. Disordered regions lie at residues 41–87 (RSNS…CETG) and 104–135 (LNKS…HSPE). Residues 114–123 (SVASKKTGSS) show a composition bias toward polar residues. A compositionally biased stretch (basic and acidic residues) spans 124–133 (ESRKGAREHS). The 185-residue stretch at 173-357 (GIPQHFRMIA…RIMDCFLVEG (185 aa)) folds into the Rab-GAP TBC domain. The tract at residues 631–654 (ASIEKESTSEAHSTQQQPSPPLTS) is disordered. Residues 694–770 (EADTLAELKE…ESEFNEGRIN (77 aa)) adopt a coiled-coil conformation. Residues 854-888 (LAEEGSATETDELRPKELNDGNDTTDSGVQLSDSH) are disordered. Polar residues predominate over residues 874–888 (GNDTTDSGVQLSDSH).

As to quaternary structure, may interact with rab-6.2 (in GTP-bound form). As to expression, highly expressed in the terminal bulb muscles, pharyngeal muscle, in intestine and vulva.

Functionally, rab GTPase activating protein for the small GTPase rab-6.2. Required for grinder formation, which is the feeding organ that breaks down food. The sequence is that of Rab GTPase-activating protein eat-17 from Caenorhabditis elegans.